The primary structure comprises 285 residues: Ribosomal protein L11 methyltransferase (285 aa).

Positions 131, 154, 176, and 223 each coordinate S-adenosyl-L-methionine.

It belongs to the methyltransferase superfamily. PrmA family.

The protein localises to the cytoplasm. It catalyses the reaction L-lysyl-[protein] + 3 S-adenosyl-L-methionine = N(6),N(6),N(6)-trimethyl-L-lysyl-[protein] + 3 S-adenosyl-L-homocysteine + 3 H(+). Methylates ribosomal protein L11. In Brucella abortus (strain S19), this protein is Ribosomal protein L11 methyltransferase.